A 483-amino-acid polypeptide reads, in one-letter code: Altronate oxidoreductase (483 aa).

Position 18 to 29 (18 to 29 (IIQFGEGNFLRA)) interacts with NAD(+).

Belongs to the mannitol dehydrogenase family. UxaB subfamily.

It catalyses the reaction D-altronate + NAD(+) = keto-D-tagaturonate + NADH + H(+). The protein operates within carbohydrate metabolism; pentose and glucuronate interconversion. The protein is Altronate oxidoreductase of Shigella flexneri serotype 5b (strain 8401).